The chain runs to 371 residues: Anhydro-N-acetylmuramic acid kinase (371 aa).

9 to 16 (GTSMDGID) contacts ATP.

It belongs to the anhydro-N-acetylmuramic acid kinase family.

The enzyme catalyses 1,6-anhydro-N-acetyl-beta-muramate + ATP + H2O = N-acetyl-D-muramate 6-phosphate + ADP + H(+). The protein operates within amino-sugar metabolism; 1,6-anhydro-N-acetylmuramate degradation. It functions in the pathway cell wall biogenesis; peptidoglycan recycling. Its function is as follows. Catalyzes the specific phosphorylation of 1,6-anhydro-N-acetylmuramic acid (anhMurNAc) with the simultaneous cleavage of the 1,6-anhydro ring, generating MurNAc-6-P. Is required for the utilization of anhMurNAc either imported from the medium or derived from its own cell wall murein, and thus plays a role in cell wall recycling. In Azorhizobium caulinodans (strain ATCC 43989 / DSM 5975 / JCM 20966 / LMG 6465 / NBRC 14845 / NCIMB 13405 / ORS 571), this protein is Anhydro-N-acetylmuramic acid kinase.